The sequence spans 510 residues: NAD(P)H-quinone oxidoreductase subunit 2 A, chloroplastic (510 aa).

The next 14 membrane-spanning stretches (helical) occupy residues 31–51, 59–79, 99–119, 124–144, 149–169, 184–204, 229–249, 261–281, 295–315, 323–343, 354–374, 395–415, 418–438, and 484–504; these read FIFP…IDLT, WFYF…LFRW, IFQF…VEYI, MAIT…MFLC, LITI…LSGY, LLMG…LYGL, ISIA…LAPF, PTPV…ALAT, WHLL…LLAI, MLAY…IVGD, YMLF…LFGL, ALSL…AGFF, LYLF…IGLL, and MTVC…ILAI.

This sequence belongs to the complex I subunit 2 family. As to quaternary structure, NDH is composed of at least 16 different subunits, 5 of which are encoded in the nucleus.

Its subcellular location is the plastid. The protein resides in the chloroplast thylakoid membrane. It catalyses the reaction a plastoquinone + NADH + (n+1) H(+)(in) = a plastoquinol + NAD(+) + n H(+)(out). The enzyme catalyses a plastoquinone + NADPH + (n+1) H(+)(in) = a plastoquinol + NADP(+) + n H(+)(out). Functionally, NDH shuttles electrons from NAD(P)H:plastoquinone, via FMN and iron-sulfur (Fe-S) centers, to quinones in the photosynthetic chain and possibly in a chloroplast respiratory chain. The immediate electron acceptor for the enzyme in this species is believed to be plastoquinone. Couples the redox reaction to proton translocation, and thus conserves the redox energy in a proton gradient. This is NAD(P)H-quinone oxidoreductase subunit 2 A, chloroplastic from Saccharum hybrid (Sugarcane).